A 184-amino-acid chain; its full sequence is ATP synthase subunit b 1 (184 aa).

Residues 36–55 (NILNLAILVGVLVFYGRKVV) traverse the membrane as a helical segment.

Belongs to the ATPase B chain family. As to quaternary structure, F-type ATPases have 2 components, F(1) - the catalytic core - and F(0) - the membrane proton channel. F(1) has five subunits: alpha(3), beta(3), gamma(1), delta(1), epsilon(1). F(0) has four main subunits: a(1), b(1), b'(1) and c(10-14). The alpha and beta chains form an alternating ring which encloses part of the gamma chain. F(1) is attached to F(0) by a central stalk formed by the gamma and epsilon chains, while a peripheral stalk is formed by the delta, b and b' chains.

Its subcellular location is the cellular thylakoid membrane. Functionally, f(1)F(0) ATP synthase produces ATP from ADP in the presence of a proton or sodium gradient. F-type ATPases consist of two structural domains, F(1) containing the extramembraneous catalytic core and F(0) containing the membrane proton channel, linked together by a central stalk and a peripheral stalk. During catalysis, ATP synthesis in the catalytic domain of F(1) is coupled via a rotary mechanism of the central stalk subunits to proton translocation. In terms of biological role, component of the F(0) channel, it forms part of the peripheral stalk, linking F(1) to F(0). This is ATP synthase subunit b 1 from Crocosphaera subtropica (strain ATCC 51142 / BH68) (Cyanothece sp. (strain ATCC 51142)).